Consider the following 218-residue polypeptide: Pyridoxine/pyridoxamine 5'-phosphate oxidase (218 aa).

Residues 12–15 and Arg70 contribute to the substrate site; that span reads RLSY. FMN contacts are provided by residues 65–70, 80–81, Lys87, and Gln109; these read RTVLLR and YT. Tyr127, Arg131, and Ser135 together coordinate substrate. Residues 145-146 and Trp191 contribute to the FMN site; that span reads QS. Position 197–199 (197–199) interacts with substrate; the sequence is RLH. Arg201 provides a ligand contact to FMN.

The protein belongs to the pyridoxamine 5'-phosphate oxidase family. Homodimer. FMN is required as a cofactor.

The catalysed reaction is pyridoxamine 5'-phosphate + O2 + H2O = pyridoxal 5'-phosphate + H2O2 + NH4(+). It carries out the reaction pyridoxine 5'-phosphate + O2 = pyridoxal 5'-phosphate + H2O2. The protein operates within cofactor metabolism; pyridoxal 5'-phosphate salvage; pyridoxal 5'-phosphate from pyridoxamine 5'-phosphate: step 1/1. It functions in the pathway cofactor metabolism; pyridoxal 5'-phosphate salvage; pyridoxal 5'-phosphate from pyridoxine 5'-phosphate: step 1/1. Functionally, catalyzes the oxidation of either pyridoxine 5'-phosphate (PNP) or pyridoxamine 5'-phosphate (PMP) into pyridoxal 5'-phosphate (PLP). This Acinetobacter baumannii (strain AB0057) protein is Pyridoxine/pyridoxamine 5'-phosphate oxidase.